A 300-amino-acid chain; its full sequence is Estradiol 17-beta-dehydrogenase 11 (300 aa).

A signal peptide spans 1–19 (MKFLLDVLLLLPLLIVCSL). 40-64 (LITGAGHGIGRLTAYEFAKLKSKLV) is a binding site for NADP(+). Serine 172 serves as a coordination point for substrate. Tyrosine 185 serves as the catalytic Proton acceptor.

It belongs to the short-chain dehydrogenases/reductases (SDR) family. 17-beta-HSD 3 subfamily.

It localises to the endoplasmic reticulum. The protein localises to the lipid droplet. The enzyme catalyses 17beta-estradiol + NAD(+) = estrone + NADH + H(+). The catalysed reaction is 17beta-estradiol + NADP(+) = estrone + NADPH + H(+). In terms of biological role, can convert androstan-3-alpha,17-beta-diol (3-alpha-diol) to androsterone in vitro, suggesting that it may participate in androgen metabolism during steroidogenesis. May act by metabolizing compounds that stimulate steroid synthesis and/or by generating metabolites that inhibit it. Has no activity toward DHEA (dehydroepiandrosterone), or A-dione (4-androste-3,17-dione), and only a slight activity toward testosterone to A-dione. The protein is Estradiol 17-beta-dehydrogenase 11 (HSD17B11) of Pongo abelii (Sumatran orangutan).